We begin with the raw amino-acid sequence, 284 residues long: D-tagatose-1,6-bisphosphate aldolase subunit GatY (284 aa).

The active-site Proton donor is aspartate 82. 2 residues coordinate Zn(2+): histidine 83 and histidine 180. Glycine 181 contributes to the dihydroxyacetone phosphate binding site. Histidine 208 contributes to the Zn(2+) binding site. Dihydroxyacetone phosphate-binding positions include 209–211 and 230–233; these read GAS and NVAT.

It belongs to the class II fructose-bisphosphate aldolase family. TagBP aldolase GatY subfamily. As to quaternary structure, forms a complex with GatZ. Requires Zn(2+) as cofactor.

It catalyses the reaction D-tagatofuranose 1,6-bisphosphate = D-glyceraldehyde 3-phosphate + dihydroxyacetone phosphate. The protein operates within carbohydrate metabolism; D-tagatose 6-phosphate degradation; D-glyceraldehyde 3-phosphate and glycerone phosphate from D-tagatose 6-phosphate: step 2/2. Its function is as follows. Catalytic subunit of the tagatose-1,6-bisphosphate aldolase GatYZ, which catalyzes the reversible aldol condensation of dihydroxyacetone phosphate (DHAP or glycerone-phosphate) with glyceraldehyde 3-phosphate (G3P) to produce tagatose 1,6-bisphosphate (TBP). Requires GatZ subunit for full activity and stability. Is involved in the catabolism of galactitol. The protein is D-tagatose-1,6-bisphosphate aldolase subunit GatY of Escherichia coli O6:H1 (strain CFT073 / ATCC 700928 / UPEC).